Consider the following 108-residue polypeptide: Thiosulfate sulfurtransferase GlpE (108 aa).

The region spanning 17–105 (QEKEAVLVDI…WQRQFPAEVA (89 aa)) is the Rhodanese domain. The active-site Cysteine persulfide intermediate is the cysteine 65.

Belongs to the GlpE family.

It is found in the cytoplasm. The catalysed reaction is thiosulfate + hydrogen cyanide = thiocyanate + sulfite + 2 H(+). The enzyme catalyses thiosulfate + [thioredoxin]-dithiol = [thioredoxin]-disulfide + hydrogen sulfide + sulfite + 2 H(+). Transferase that catalyzes the transfer of sulfur from thiosulfate to thiophilic acceptors such as cyanide or dithiols. May function in a CysM-independent thiosulfate assimilation pathway by catalyzing the conversion of thiosulfate to sulfite, which can then be used for L-cysteine biosynthesis. This Escherichia coli O45:K1 (strain S88 / ExPEC) protein is Thiosulfate sulfurtransferase GlpE.